A 30-amino-acid chain; its full sequence is Cyclotide cter-P (30 aa).

The cyclopeptide (Gly-Asn) cross-link spans 1–30 (GIPCGESCVFIPCITAAIGCSCKSKVCYRN). 3 disulfide bridges follow: Cys-4–Cys-20, Cys-8–Cys-22, and Cys-13–Cys-27.

This is a cyclic peptide.

It is found in the secreted. Its function is as follows. Probably participates in a plant defense mechanism. The polypeptide is Cyclotide cter-P (Clitoria ternatea (Butterfly pea)).